Consider the following 116-residue polypeptide: Beta-D-galactosidase Rv1717 (116 aa).

The Cupin type-2 domain maps to 40–107 (LSVYRPGGTA…TDRQALLLVT (68 aa)).

It is found in the secreted. It localises to the cell wall. It carries out the reaction Hydrolysis of terminal non-reducing beta-D-galactose residues in beta-D-galactosides.. Beta-galactosidase activity is activated by Mg(2+) and significantly inhibited by Ca(2+), Cd(2+), Fe(2+), Ni(2+), Cu(2+) and Zn(2+). Inhibited by EDTA. Its function is as follows. Beta-D-galactopyranosidase that specifically recognizes the beta-glycosidic bonds formed with beta-D-galactopyranose (beta-D-Gal) or N-acetylgalactosamine (beta-D-GalNAc). May target the galactoside linkages in the exopolysaccharide component of the mycobacterial extracellular polymeric substance (EPS) and help dispersal of Mtb bacteria from a deteriorating biofilm. This Mycobacterium tuberculosis (strain ATCC 25618 / H37Rv) protein is Beta-D-galactosidase Rv1717.